We begin with the raw amino-acid sequence, 152 residues long: Xanthine-guanine phosphoribosyltransferase (152 aa).

Residues Arg37 to Gly38, Arg69, and Asp88 to Thr96 contribute to the 5-phospho-alpha-D-ribose 1-diphosphate site. A GMP-binding site is contributed by Arg69. Asp89 serves as a coordination point for Mg(2+). Asp92 and Ile135 together coordinate guanine. 2 residues coordinate xanthine: Asp92 and Ile135. GMP-binding positions include Asp92–Thr96 and Trp134–Ile135.

This sequence belongs to the purine/pyrimidine phosphoribosyltransferase family. XGPT subfamily. In terms of assembly, homotetramer. The cofactor is Mg(2+).

The protein resides in the cell inner membrane. The catalysed reaction is GMP + diphosphate = guanine + 5-phospho-alpha-D-ribose 1-diphosphate. It carries out the reaction XMP + diphosphate = xanthine + 5-phospho-alpha-D-ribose 1-diphosphate. The enzyme catalyses IMP + diphosphate = hypoxanthine + 5-phospho-alpha-D-ribose 1-diphosphate. Its pathway is purine metabolism; GMP biosynthesis via salvage pathway; GMP from guanine: step 1/1. It functions in the pathway purine metabolism; XMP biosynthesis via salvage pathway; XMP from xanthine: step 1/1. Purine salvage pathway enzyme that catalyzes the transfer of the ribosyl-5-phosphate group from 5-phospho-alpha-D-ribose 1-diphosphate (PRPP) to the N9 position of the 6-oxopurines guanine and xanthine to form the corresponding ribonucleotides GMP (guanosine 5'-monophosphate) and XMP (xanthosine 5'-monophosphate), with the release of PPi. To a lesser extent, also acts on hypoxanthine. This Aliivibrio salmonicida (strain LFI1238) (Vibrio salmonicida (strain LFI1238)) protein is Xanthine-guanine phosphoribosyltransferase.